A 205-amino-acid polypeptide reads, in one-letter code: Lymphotoxin-alpha (205 aa).

The signal sequence occupies residues 1–34; sequence MTPPERLFLSRVRGTPLHLLLLGLLLVLLPGAQG. Residue threonine 41 is glycosylated (O-linked (GalNAc...) threonine). The region spanning 63-205 is the THD domain; that stretch reads PAAHLIGDPS…STVFFGAFAL (143 aa). Asparagine 96 carries an N-linked (GlcNAc...) asparagine glycan.

It belongs to the tumor necrosis factor family. As to quaternary structure, homotrimer, and heterotrimer of either two LTB and one LTA subunits or (less prevalent) two LTA and one LTB subunits. Interacts with TNFRSF14.

The protein localises to the secreted. The protein resides in the membrane. Functionally, cytokine that in its homotrimeric form binds to TNFRSF1A/TNFR1, TNFRSF1B/TNFBR and TNFRSF14/HVEM. In its heterotrimeric form with LTB binds to TNFRSF3/LTBR. Lymphotoxin is produced by lymphocytes and is cytotoxic for a wide range of tumor cells in vitro and in vivo. The sequence is that of Lymphotoxin-alpha (LTA) from Macaca mulatta (Rhesus macaque).